The following is a 496-amino-acid chain: Probable serine/threonine-protein kinase DDB_G0284251 (496 aa).

The segment covering 1–13 has biased composition (low complexity); it reads MIEINNNHNNGNG. The segment at 1-25 is disordered; it reads MIEINNNHNNGNGKQFPSSQIMPDS. In terms of domain architecture, Protein kinase spans 36–288; it reads YTLGEKIGRG…AQELLQHPIF (253 aa). ATP is bound by residues 42–50 and lysine 65; that span reads IGRGAFGQV. Aspartate 158 acts as the Proton acceptor in catalysis. Residues 323-345 are disordered; the sequence is DWGSSSSTSGSSTPLSSSSSSSN. A coiled-coil region spans residues 353 to 386; sequence EDFNKLQTTIKQQAQTISNLSEEILILKKELKEK. The segment at 454–496 is disordered; that stretch reads PQLTPSSSRENISLSNSSSSIPNPNQNQNQNNKSKSKKFGFFS. Over residues 458–486 the composition is skewed to low complexity; it reads PSSSRENISLSNSSSSIPNPNQNQNQNNK. Basic residues predominate over residues 487–496; sequence SKSKKFGFFS.

This sequence belongs to the protein kinase superfamily. STE Ser/Thr protein kinase family. Mg(2+) is required as a cofactor.

The enzyme catalyses L-seryl-[protein] + ATP = O-phospho-L-seryl-[protein] + ADP + H(+). The catalysed reaction is L-threonyl-[protein] + ATP = O-phospho-L-threonyl-[protein] + ADP + H(+). The chain is Probable serine/threonine-protein kinase DDB_G0284251 from Dictyostelium discoideum (Social amoeba).